Reading from the N-terminus, the 144-residue chain is Eukaryotic translation initiation factor 1A, X-chromosomal (144 aa).

Positions 1–15 (MPKNKGKGGKNRRRG) are enriched in basic residues. Disordered stretches follow at residues 1 to 26 (MPKN…KREL) and 114 to 144 (KINE…IDDI). A compositionally biased stretch (basic and acidic residues) spans 16–26 (KNENESEKREL). One can recognise an S1-like domain in the interval 22–96 (EKRELVFKED…NKADVILKYN (75 aa)). Over residues 124-144 (GDDDEIQFDDIGDDDEDIDDI) the composition is skewed to acidic residues.

Belongs to the eIF-1A family. As to quaternary structure, component of the 43S pre-initiation complex (43S PIC), which is composed of the 40S ribosomal subunit, EIF1, eIF1A (EIF1AX), eIF3 complex, EIF5 and eIF2-GTP-initiator tRNA complex (eIF2 ternary complex). Interacts with EIF5; this interaction contributes to the maintenance of EIF1 within the open 43S PIC. Interacts through its C-terminal domain (CTD) with the CTD of EIF5B; from the location of the start codon by the 43S complex until the formation of the 80S complex. (Microbial infection) Interacts with human respiratory syncytial virus (HRSV) nucleoprotein; this interaction recruits EIF1AX to the viral replication complex to facilitate viral genomic RNA synthesis and virus production.

It localises to the cytoplasm. Component of the 43S pre-initiation complex (43S PIC), which binds to the mRNA cap-proximal region, scans mRNA 5'-untranslated region, and locates the initiation codon. This protein enhances formation of the cap-proximal complex. Together with EIF1, facilitates scanning, start codon recognition, promotion of the assembly of 48S complex at the initiation codon (43S PIC becomes 48S PIC after the start codon is reached), and dissociation of aberrant complexes. After start codon location, together with EIF5B orients the initiator methionine-tRNA in a conformation that allows 60S ribosomal subunit joining to form the 80S initiation complex. Is released after 80S initiation complex formation, just after GTP hydrolysis by EIF5B, and before release of EIF5B. Its globular part is located in the A site of the 40S ribosomal subunit. Its interaction with EIF5 during scanning contribute to the maintenance of EIF1 within the open 43S PIC. In contrast to yeast orthologs, does not bind EIF1. The protein is Eukaryotic translation initiation factor 1A, X-chromosomal (EIF1AX) of Homo sapiens (Human).